The primary structure comprises 116 residues: Vesicle-associated membrane protein 5 (116 aa).

Residues 1-72 (MAGIELERCQ…CWENIRYRIC (72 aa)) lie on the Cytoplasmic side of the membrane. The v-SNARE coiled-coil homology domain maps to 5 to 65 (ELERCQQQAN…QNLAQKKCWE (61 aa)). 3 positions are modified to phosphoserine: S41, S48, and S49. A helical; Anchor for type IV membrane protein transmembrane segment spans residues 73–93 (VGLVVVGVLLIILIVLLVVFL). Residues 94-116 (PQSSDSSSAPRTQDAGIASGPGN) lie on the Vesicular side of the membrane. The tract at residues 96-116 (SSDSSSAPRTQDAGIASGPGN) is disordered.

It belongs to the synaptobrevin family. (Microbial infection) Targeted and hydrolyzed by C.botulinum neurotoxin type X (BoNT/X) which hydrolyzes the 40-Arg-|-Ser-41 bond and probably inhibits neurotransmitter release. It remains unknown whether BoNT/X is ever produced, or what organisms it targets.

The protein resides in the cell membrane. It localises to the endomembrane system. It is found in the golgi apparatus. Its subcellular location is the trans-Golgi network membrane. Its function is as follows. May participate in trafficking events that are associated with myogenesis, such as myoblast fusion and/or GLUT4 trafficking. The sequence is that of Vesicle-associated membrane protein 5 (VAMP5) from Homo sapiens (Human).